Reading from the N-terminus, the 67-residue chain is DNA gyrase inhibitor YacG (67 aa).

Positions 10, 13, 29, and 33 each coordinate Zn(2+).

The protein belongs to the DNA gyrase inhibitor YacG family. In terms of assembly, interacts with GyrB. Zn(2+) serves as cofactor.

Its function is as follows. Inhibits all the catalytic activities of DNA gyrase by preventing its interaction with DNA. Acts by binding directly to the C-terminal domain of GyrB, which probably disrupts DNA binding by the gyrase. This is DNA gyrase inhibitor YacG from Pasteurella multocida (strain Pm70).